The chain runs to 256 residues: Zinc import ATP-binding protein ZnuC (256 aa).

One can recognise an ABC transporter domain in the interval 6–221 (IAAEGLSIRV…PEYRALFGTG (216 aa)). 38–45 (GPNGSGKS) contacts ATP. Positions 237 to 256 (HDDDCGHDHGAEHMHPHGDR) are disordered.

The protein belongs to the ABC transporter superfamily. Zinc importer (TC 3.A.1.15.5) family. As to quaternary structure, the complex is composed of two ATP-binding proteins (ZnuC), two transmembrane proteins (ZnuB) and a solute-binding protein (ZnuA).

The protein localises to the cell inner membrane. It catalyses the reaction Zn(2+)(out) + ATP(in) + H2O(in) = Zn(2+)(in) + ADP(in) + phosphate(in) + H(+)(in). Part of the ABC transporter complex ZnuABC involved in zinc import. Responsible for energy coupling to the transport system. This chain is Zinc import ATP-binding protein ZnuC, found in Ruegeria pomeroyi (strain ATCC 700808 / DSM 15171 / DSS-3) (Silicibacter pomeroyi).